The chain runs to 337 residues: Peroxidase 14 (337 aa).

The signal sequence occupies residues 1–22 (MARIGSFLILLSLTYALTLCIC). Residue N24 is glycosylated (N-linked (GlcNAc...) asparagine). Intrachain disulfides connect C44–C124, C77–C82, C130–C331, and C209–C241. H75 serves as the catalytic Proton acceptor. The Ca(2+) site is built by D76, V79, G81, D83, and S85. P172 contacts substrate. N-linked (GlcNAc...) asparagine glycosylation is present at N191. H202 is a binding site for heme b. T203 contacts Ca(2+). 2 N-linked (GlcNAc...) asparagine glycosylation sites follow: N218 and N249. 3 residues coordinate Ca(2+): D254, S257, and D262.

This sequence belongs to the peroxidase family. Classical plant (class III) peroxidase subfamily. Heme b is required as a cofactor. Ca(2+) serves as cofactor.

It localises to the secreted. The enzyme catalyses 2 a phenolic donor + H2O2 = 2 a phenolic radical donor + 2 H2O. Functionally, removal of H(2)O(2), oxidation of toxic reductants, biosynthesis and degradation of lignin, suberization, auxin catabolism, response to environmental stresses such as wounding, pathogen attack and oxidative stress. These functions might be dependent on each isozyme/isoform in each plant tissue. This chain is Peroxidase 14 (PER14), found in Arabidopsis thaliana (Mouse-ear cress).